Here is a 254-residue protein sequence, read N- to C-terminus: MSSAFTVVIPARYASTRLPGKPLQLIAGKPMIQWVWEQARKSSAERVVVATDDQRIVEACQGFGAEALLTREDHNSGTDRLAEVAAQLGLAADAIVVNVQGDEPLIPPSVIDQVAANLAAHTEARMATLAEPIEDVQTLFNPNVVKVVSDLNGLALTFSRATLPWARDAFAQSREQLPEGVPYRRHIGIYAYRAGFLHDFVSWGPCWLENTESLEQLRALWHGVRIHVADALEAPPTGVDTAEDLERVRRLLEA.

It belongs to the KdsB family.

The protein resides in the cytoplasm. The enzyme catalyses 3-deoxy-alpha-D-manno-oct-2-ulosonate + CTP = CMP-3-deoxy-beta-D-manno-octulosonate + diphosphate. The protein operates within nucleotide-sugar biosynthesis; CMP-3-deoxy-D-manno-octulosonate biosynthesis; CMP-3-deoxy-D-manno-octulosonate from 3-deoxy-D-manno-octulosonate and CTP: step 1/1. Its pathway is bacterial outer membrane biogenesis; lipopolysaccharide biosynthesis. Functionally, activates KDO (a required 8-carbon sugar) for incorporation into bacterial lipopolysaccharide in Gram-negative bacteria. This Pseudomonas fluorescens (strain ATCC BAA-477 / NRRL B-23932 / Pf-5) protein is 3-deoxy-manno-octulosonate cytidylyltransferase.